The sequence spans 594 residues: UvrABC system protein C (594 aa).

A GIY-YIG domain is found at 13–99 (HSSGVYQYFD…IKQLKPKYNI (87 aa)). In terms of domain architecture, UVR spans 205–240 (DKLIKELELKMERLSNNLRFEEALIYRDRIAKIQKI).

It belongs to the UvrC family. In terms of assembly, interacts with UvrB in an incision complex.

The protein resides in the cytoplasm. In terms of biological role, the UvrABC repair system catalyzes the recognition and processing of DNA lesions. UvrC both incises the 5' and 3' sides of the lesion. The N-terminal half is responsible for the 3' incision and the C-terminal half is responsible for the 5' incision. This Helicobacter pylori (strain HPAG1) protein is UvrABC system protein C.